A 245-amino-acid polypeptide reads, in one-letter code: DNA polymerase sliding clamp (245 aa).

Belongs to the PCNA family. As to quaternary structure, homotrimer. The subunits circularize to form a toroid; DNA passes through its center. Replication factor C (RFC) is required to load the toroid on the DNA.

In terms of biological role, sliding clamp subunit that acts as a moving platform for DNA processing. Responsible for tethering the catalytic subunit of DNA polymerase and other proteins to DNA during high-speed replication. The polypeptide is DNA polymerase sliding clamp (Methanosarcina acetivorans (strain ATCC 35395 / DSM 2834 / JCM 12185 / C2A)).